We begin with the raw amino-acid sequence, 135 residues long: Retinol-binding protein 1 (135 aa).

The important for interaction with STRA6 stretch occupies residues 22 to 32 (RALDVNVALRK). 3 residues coordinate all-trans-retinol: Lys-41, Met-63, and Gln-109.

Belongs to the calycin superfamily. Fatty-acid binding protein (FABP) family. As to quaternary structure, interacts (only as retinol-free apoprotein) with STRA6.

It is found in the cytoplasm. The protein localises to the lipid droplet. In terms of biological role, cytoplasmic retinol-binding protein. Accepts retinol from the transport protein STRA6, and thereby contributes to retinol uptake, storage and retinoid homeostasis. The sequence is that of Retinol-binding protein 1 (Rbp1) from Rattus norvegicus (Rat).